A 326-amino-acid polypeptide reads, in one-letter code: Cobalamin biosynthesis protein CobD (326 aa).

4 helical membrane-spanning segments follow: residues 58–78 (MRGVATILILLAASILLGVVL), 81–101 (LFDVLGAVGFILEAITVAVFL), 157–177 (FSDGVVAPALWYAVAGLPGLL), and 304–324 (VFYRACTTLAAASAVLVLPFL).

It belongs to the CobD/CbiB family.

The protein localises to the cell membrane. The protein operates within cofactor biosynthesis; adenosylcobalamin biosynthesis. Converts cobyric acid to cobinamide by the addition of aminopropanol on the F carboxylic group. In Sinorhizobium fredii (strain NBRC 101917 / NGR234), this protein is Cobalamin biosynthesis protein CobD.